A 303-amino-acid chain; its full sequence is Phosphatidylglycerol--prolipoprotein diacylglyceryl transferase (303 aa).

The next 4 helical transmembrane spans lie at 18–38 (LGPF…LVGL), 58–78 (LLPI…VAFE), 106–126 (IWGG…SIIF), and 133–153 (EPFW…QAIG). R154 is a binding site for a 1,2-diacyl-sn-glycero-3-phospho-(1'-sn-glycerol). Helical transmembrane passes span 193-213 (PTFL…IFLF), 223-243 (LPPG…RFWI), and 266-286 (IAQL…WRIY).

It belongs to the Lgt family.

The protein localises to the cell inner membrane. It catalyses the reaction L-cysteinyl-[prolipoprotein] + a 1,2-diacyl-sn-glycero-3-phospho-(1'-sn-glycerol) = an S-1,2-diacyl-sn-glyceryl-L-cysteinyl-[prolipoprotein] + sn-glycerol 1-phosphate + H(+). The protein operates within protein modification; lipoprotein biosynthesis (diacylglyceryl transfer). In terms of biological role, catalyzes the transfer of the diacylglyceryl group from phosphatidylglycerol to the sulfhydryl group of the N-terminal cysteine of a prolipoprotein, the first step in the formation of mature lipoproteins. The protein is Phosphatidylglycerol--prolipoprotein diacylglyceryl transferase of Prochlorococcus marinus (strain NATL1A).